The following is a 290-amino-acid chain: MHPINVRRDPSIPIYGLRQSILLNTRLQDCYVDSPALTNIWMARTCAKQNINAPAPATTSSWEVVRNPLIASSFSLVKLVLRRQLKNKCCPPPCKFGEGKLSKRLKHKDDSVMKATQQARKRNFISSKSKQPAGHRRPAGGIRESKESSKEKKLTVRQDLEDRYAEHVAATQALPQDSGTAAWKGRVLLPETQKRQQLSEDTLTIHGLPTEGYQALYHAVVEPMLWNPSGTPKRYSLELGKAIKQKLWEALCSQGAISEGAQRDRFPGRKQPGVHEEPVLKKWPKLKSKK.

2 disordered regions span residues 105-156 and 259-290; these read LKHK…KLTV and EGAQRDRFPGRKQPGVHEEPVLKKWPKLKSKK. Over residues 114–130 the composition is skewed to polar residues; that stretch reads KATQQARKRNFISSKSK. 2 stretches are compositionally biased toward basic and acidic residues: residues 143–156 and 261–280; these read RESKESSKEKKLTV and AQRDRFPGRKQPGVHEEPVL.

This is an uncharacterized protein from Homo sapiens (Human).